Reading from the N-terminus, the 1025-residue chain is MSCLIPENLRNPKKVHENRLPTRAYYYDQDIFESLNGPWAFALFDAPLDAPDAKNLDWETAKKWSTISVPSHWELQEDWKYGKPIYTNVQYPIPIDIPNPPTVNPTGVYARTFELDSKSIESFEHRLRFEGVDNCYELYVNGQYVGFNKGSRNGAEFDIQKYVSEGENLVVVKVFKWSDSTYIEDQDQWWLSGIYRDVSLLKLPKKAHIEDVRVTTTFVDSQYQDAELSVKVDVQGSSYDHINFTLYEPEDGSKVYDASSLLNEENGNTTFSTKEFISFSTKKNEETAFKINVKAPEHWTAENPTLYKYQLDLIGSDGSVIQSIKHHVGFRQVELKDGNITVNGKDILFRGVNRHDHHPRFGRAVPLDFVVRDLILMKKFNINAVRNSHYPNHPKVYDLFDKLGFWVIDEADLETHGVQEPFNRHTNLEAEYPDTKNKLYDVNAHYLSDNPEYEVAYLDRASQLVLRDVNHPSIIIWSLGNEACYGRNHKAMYKLIKQLDPTRLVHYEGDLNALSADIFSFMYPTFEIMERWRKNHTDENGKFEKPLILCEYGHAMGNGPGSLKEYQELFYKEKFYQGGFIWEWANHGIEFEDVSTADGKLHKAYAYGGDFKEEVHDGVFIMDGLCNSEHNPTPGLVEYKKVIEPVHIKIAHGSVTITNKHDFITTDHLLFIDKDTGKTIDVPSLKPEESVTIPSDTTYVVAVLKDDAGVLKAGHEIAWGQAELPLKVPDFVTETAEKAAKINDGKRYVSVESSGLHFILDKLLGKIESLKVKGKEISSKFEGSSITFWRPPTNNDEPRDFKNWKKYNIDLMKQNIHGVSVEKGSNGSLAVVTVNSRISPVVFYYGFETVQKYTIFANKINLNTSMKLTGEYQPPDFPRVGYEFWLGDSYESFEWLGRGPGESYPDKKESQRFGLYDSKDVEEFVYDYPQENGNHTDTHFLNIKFEGAGKLSIFQKEKPFNFKISDEYGVDEAAHACDVKRYGRHYLRLDHAIHGVGSEACGPAVLDQYRLKAQDFNFEFDLAFE.

The Proton donor role is filled by glutamate 482. Glutamate 551 acts as the Nucleophile in catalysis.

This sequence belongs to the glycosyl hydrolase 2 family.

The enzyme catalyses Hydrolysis of terminal non-reducing beta-D-galactose residues in beta-D-galactosides.. This Kluyveromyces lactis (strain ATCC 8585 / CBS 2359 / DSM 70799 / NBRC 1267 / NRRL Y-1140 / WM37) (Yeast) protein is Beta-galactosidase (LAC4).